The primary structure comprises 37 residues: Large ribosomal subunit protein bL36 (37 aa).

It belongs to the bacterial ribosomal protein bL36 family.

The sequence is that of Large ribosomal subunit protein bL36 from Staphylococcus carnosus (strain TM300).